We begin with the raw amino-acid sequence, 680 residues long: NADPH--cytochrome P450 reductase (680 aa).

Topologically, residues 1-5 (MALDK) are lumenal. A helical membrane pass occupies residues 6–23 (LDLYVIIVLAVAVAAYFA). Topologically, residues 24-680 (KNQFLDQPQD…VQNRYQEDVW (657 aa)) are cytoplasmic. Residues 60–204 (TLLLFGSQTG…DFLTWKDNVF (145 aa)) enclose the Flavodoxin-like domain. Residues 66-71 (SQTGTA), 117-120 (ATYG), 152-161 (LGNSTYEFYN), and Asp-187 each bind FMN. Positions 264–509 (THPYLAKISK…SGPRNKFNKF (246 aa)) constitute an FAD-binding FR-type domain. Arg-283 contributes to the NADP(+) binding site. FAD is bound by residues 439–442 (RYYS), 457–459 (TAV), and 473–476 (GVVT). NADP(+) is bound by residues Thr-537, 599 to 600 (SR), 606 to 610 (KVYVQ), and Asp-642. Trp-680 serves as a coordination point for FAD.

It belongs to the NADPH--cytochrome P450 reductase family. The protein in the N-terminal section; belongs to the flavodoxin family. In the C-terminal section; belongs to the flavoprotein pyridine nucleotide cytochrome reductase family. FAD is required as a cofactor. FMN serves as cofactor.

The protein resides in the endoplasmic reticulum membrane. It localises to the mitochondrion outer membrane. The protein localises to the cell membrane. The catalysed reaction is 2 oxidized [cytochrome P450] + NADPH = 2 reduced [cytochrome P450] + NADP(+) + H(+). In terms of biological role, this enzyme is required for electron transfer from NADP to cytochrome P450 in microsomes. It can also provide electron transfer to heme oxygenase and cytochrome B5. Involved in ergosterol biosynthesis. The chain is NADPH--cytochrome P450 reductase from Candida maltosa (Yeast).